The sequence spans 247 residues: Probable transcriptional regulatory protein BT_0627 (247 aa).

It belongs to the TACO1 family.

The protein resides in the cytoplasm. This Bacteroides thetaiotaomicron (strain ATCC 29148 / DSM 2079 / JCM 5827 / CCUG 10774 / NCTC 10582 / VPI-5482 / E50) protein is Probable transcriptional regulatory protein BT_0627.